The chain runs to 539 residues: Transcription factor prr1 (539 aa).

The DNA-binding element occupies 7–111; it reads SSDFVRKLFN…LLDNIKRKAP (105 aa). Residue T221 is modified to Phosphothreonine. S223 is subject to Phosphoserine. The segment covering 251 to 263 has biased composition (polar residues); that stretch reads GTAQPSLYNTPSS. The disordered stretch occupies residues 251–281; it reads GTAQPSLYNTPSSDYELANQEKPADSMASAA. The region spanning 369–483 is the Response regulatory domain; sequence RILLVEDDEL…TLLQLLKKQL (115 aa). D418 is subject to 4-aspartylphosphate.

The protein in the N-terminal section; belongs to the HSF family.

Its subcellular location is the nucleus. Its function is as follows. Involved in oxidative stress. Transcription factor that acts upon trr1 and ctt1. This Schizosaccharomyces pombe (strain 972 / ATCC 24843) (Fission yeast) protein is Transcription factor prr1 (prr1).